The chain runs to 222 residues: Protein GrpE (222 aa).

The interval 1 to 21 is disordered; that stretch reads MSDEKNKFTDASFENCDLKNP.

This sequence belongs to the GrpE family. In terms of assembly, homodimer.

It is found in the cytoplasm. Functionally, participates actively in the response to hyperosmotic and heat shock by preventing the aggregation of stress-denatured proteins, in association with DnaK and GrpE. It is the nucleotide exchange factor for DnaK and may function as a thermosensor. Unfolded proteins bind initially to DnaJ; upon interaction with the DnaJ-bound protein, DnaK hydrolyzes its bound ATP, resulting in the formation of a stable complex. GrpE releases ADP from DnaK; ATP binding to DnaK triggers the release of the substrate protein, thus completing the reaction cycle. Several rounds of ATP-dependent interactions between DnaJ, DnaK and GrpE are required for fully efficient folding. In Bartonella tribocorum (strain CIP 105476 / IBS 506), this protein is Protein GrpE.